The following is a 92-amino-acid chain: MPRSLKKGPFIDLHLLKKVEKAVEAGDKKPIKTWSRRSMIIPQMIGLTIAVHNGRQHVPVFVTDEMIGHKLGEFSPTRTYRGHAADKKAKKR.

Belongs to the universal ribosomal protein uS19 family.

Protein S19 forms a complex with S13 that binds strongly to the 16S ribosomal RNA. The chain is Small ribosomal subunit protein uS19 from Shewanella amazonensis (strain ATCC BAA-1098 / SB2B).